The sequence spans 259 residues: MAQQVNEWLIALAVAFIRPLSLSLLLPLLKSGSLGAALLRNGVLMSLTFPILPIIYQQKIMMHIGKDYSWLGLVTGEVIIGFSIGFCAAVPFWAVDMAGFLLDTLRGATMGTIFNSTIEAETSLFGLLFSQFLCVIFFISGGMEFILNILYESYQYLPPGRTLLFDQQFLKYIQAEWRTLYQLCISFSLPAIICMVLADLALGLLNRSAQQLNVFFFSMPLKSILVLLTLLISFPYALHHYLVESDKFYIYLKDWFPSV.

6 helical membrane-spanning segments follow: residues 9-29, 35-55, 78-98, 127-147, 185-205, and 214-234; these read LIALAVAFIRPLSLSLLLPLL, GAALLRNGVLMSLTFPILPII, VIIGFSIGFCAAVPFWAVDMA, LLFSQFLCVIFFISGGMEFIL, ISFSLPAIICMVLADLALGLL, and VFFFSMPLKSILVLLTLLISF.

The protein belongs to the FliR/MopE/SpaR family.

The protein localises to the cell membrane. Part of a type III secretion system. This chain is Secretion system apparatus protein SsaT (ssaT), found in Salmonella typhimurium (strain LT2 / SGSC1412 / ATCC 700720).